The following is a 180-amino-acid chain: Cytochrome b6-f complex iron-sulfur subunit 2 (180 aa).

The helical transmembrane segment at 21–43 (LLTFGTITGVAAGALYPAVKYLI) threads the bilayer. A Rieske domain is found at 66–162 (VTEFLASHNA…ATVTDDDKLV (97 aa)). 4 residues coordinate [2Fe-2S] cluster: Cys108, His110, Cys126, and His129. A disulfide bridge connects residues Cys113 and Cys128.

The protein belongs to the Rieske iron-sulfur protein family. The 4 large subunits of the cytochrome b6-f complex are cytochrome b6, subunit IV (17 kDa polypeptide, PetD), cytochrome f and the Rieske protein, while the 4 small subunits are PetG, PetL, PetM and PetN. The complex functions as a dimer. [2Fe-2S] cluster serves as cofactor.

Its subcellular location is the cellular thylakoid membrane. The catalysed reaction is 2 oxidized [plastocyanin] + a plastoquinol + 2 H(+)(in) = 2 reduced [plastocyanin] + a plastoquinone + 4 H(+)(out). In terms of biological role, component of the cytochrome b6-f complex, which mediates electron transfer between photosystem II (PSII) and photosystem I (PSI), cyclic electron flow around PSI, and state transitions. The chain is Cytochrome b6-f complex iron-sulfur subunit 2 from Synechocystis sp. (strain ATCC 27184 / PCC 6803 / Kazusa).